The following is a 210-amino-acid chain: Glutathione S-transferase P (210 aa).

In terms of domain architecture, GST N-terminal spans 2-81 (ASYTIVYFPV…HLGRTLGLYG (80 aa)). Position 4 is a phosphotyrosine; by EGFR (Tyr-4). Glutathione-binding positions include Tyr-8, Arg-14, Trp-39, Lys-45, and 52-53 (QL). Thr-62 is subject to Phosphothreonine. 65–66 (QS) is a binding site for glutathione. Residues 83-204 (DQREAALVDM…ASPEHVNRPI (122 aa)) enclose the GST C-terminal domain. N6-succinyllysine is present on residues Lys-103 and Lys-116. N6-acetyllysine is present on Lys-128.

It belongs to the GST superfamily. Pi family. As to quaternary structure, homodimer. Interacts with CDK5.

Its subcellular location is the cytoplasm. It localises to the mitochondrion. The protein localises to the nucleus. It catalyses the reaction RX + glutathione = an S-substituted glutathione + a halide anion + H(+). The catalysed reaction is prostaglandin J2 + glutathione = prostaglandin J2-S-(R)-glutathione. The enzyme catalyses prostaglandin J2 + glutathione = prostaglandin J2-S-(S)-glutathione. It carries out the reaction prostaglandin A2 + glutathione = prostaglandin A2-S-(S)-glutathione. It catalyses the reaction 11(S)-hydroxy-14(S),15(S)-epoxy-(5Z,8Z,12E)-eicosatrienoate + glutathione = (11S,15S)-dihydroxy-14(R)-S-glutathionyl-(5Z,8Z,12E)-eicosatrienoate. In terms of biological role, conjugation of reduced glutathione to a wide number of exogenous and endogenous hydrophobic electrophiles. Involved in the formation of glutathione conjugates of both prostaglandin A2 (PGA2) and prostaglandin J2 (PGJ2). Participates in the formation of novel hepoxilin regioisomers. Negatively regulates CDK5 activity via p25/p35 translocation to prevent neurodegeneration. The sequence is that of Glutathione S-transferase P (GSTP1) from Capra hircus (Goat).